A 312-amino-acid chain; its full sequence is Peroxidase (312 aa).

The signal sequence occupies residues 1–23 (MAMGSASCISLVVLVALATAASG). Residue Gln-24 is modified to Pyrrolidone carboxylic acid. Intrachain disulfides connect Cys-34–Cys-107, Cys-67–Cys-70, Cys-113–Cys-307, and Cys-192–Cys-218. The Proton acceptor role is filled by His-65. Ca(2+)-binding residues include Asp-66, Gly-69, Asp-71, and Ser-73. A substrate-binding site is contributed by Pro-155. A heme b-binding site is contributed by His-185. Thr-186 is a binding site for Ca(2+). Ca(2+) contacts are provided by Asp-231, Thr-234, and Asp-239. Residue Asn-262 is glycosylated (N-linked (GlcNAc...) asparagine).

This sequence belongs to the peroxidase family. Classical plant (class III) peroxidase subfamily. The cofactor is Ca(2+). It depends on heme b as a cofactor. In terms of tissue distribution, root.

The protein resides in the secreted. The catalysed reaction is 2 a phenolic donor + H2O2 = 2 a phenolic radical donor + 2 H2O. Removal of H(2)O(2), oxidation of toxic reductants, biosynthesis and degradation of lignin, suberization, auxin catabolism, response to environmental stresses such as wounding, pathogen attack and oxidative stress. These functions might be dependent on each isozyme/isoform in each plant tissue. In terms of biological role, involved in defense response to powdery meldew fungus. The sequence is that of Peroxidase from Triticum aestivum (Wheat).